The sequence spans 285 residues: Shikimate dehydrogenase (NADP(+)) (285 aa).

Shikimate contacts are provided by residues 20 to 22 (SIS) and S67. Catalysis depends on K71, which acts as the Proton acceptor. N92 and D107 together coordinate shikimate. NADP(+)-binding positions include 129 to 133 (GAGGA) and I227. Y229 is a binding site for shikimate. G250 is a binding site for NADP(+).

This sequence belongs to the shikimate dehydrogenase family. Homodimer.

It catalyses the reaction shikimate + NADP(+) = 3-dehydroshikimate + NADPH + H(+). The protein operates within metabolic intermediate biosynthesis; chorismate biosynthesis; chorismate from D-erythrose 4-phosphate and phosphoenolpyruvate: step 4/7. Its function is as follows. Involved in the biosynthesis of the chorismate, which leads to the biosynthesis of aromatic amino acids. Catalyzes the reversible NADPH linked reduction of 3-dehydroshikimate (DHSA) to yield shikimate (SA). The protein is Shikimate dehydrogenase (NADP(+)) of Streptococcus thermophilus (strain ATCC BAA-491 / LMD-9).